Reading from the N-terminus, the 274-residue chain is Long chain fatty acid elongase 2 (274 aa).

7 consecutive transmembrane segments (helical) span residues 29-49, 73-93, 115-135, 140-160, 170-190, 201-221, and 238-258; these read MSTF…TIYF, FSLF…GVFM, FWGW…MFLV, PVIF…VVTY, SLAL…VRAL, FITT…GHLV, and VLSI…KFFY.

This sequence belongs to the ELO family. As to expression, expressed in various tissues and parts of the body, including the ventral cord, pharyngeal muscles, uterus, and the tail, and most strongly in intestinal cells.

It is found in the membrane. The catalysed reaction is hexadecanoyl-CoA + malonyl-CoA + H(+) = 3-oxooctadecanoyl-CoA + CO2 + CoA. Its pathway is lipid metabolism; fatty acid biosynthesis. Its function is as follows. Catalyzes the first and rate-limiting reaction of the four reactions that constitute the long-chain fatty acids elongation cycle. Uses malonyl-CoA to add 2 carbons per cycle to the chain of long-chain fatty acids. Condensing enzyme responsible for the elongation of palmitate (hexadecanoate, 16:0), also involved in polyunsaturated fatty acid (PUFA) biosynthesis. The chain is Long chain fatty acid elongase 2 from Caenorhabditis elegans.